A 248-amino-acid chain; its full sequence is 3-deoxy-manno-octulosonate cytidylyltransferase 2 (248 aa).

Belongs to the KdsB family.

Its subcellular location is the cytoplasm. It catalyses the reaction 3-deoxy-alpha-D-manno-oct-2-ulosonate + CTP = CMP-3-deoxy-beta-D-manno-octulosonate + diphosphate. The protein operates within nucleotide-sugar biosynthesis; CMP-3-deoxy-D-manno-octulosonate biosynthesis; CMP-3-deoxy-D-manno-octulosonate from 3-deoxy-D-manno-octulosonate and CTP: step 1/1. It functions in the pathway bacterial outer membrane biogenesis; lipopolysaccharide biosynthesis. In terms of biological role, activates KDO (a required 8-carbon sugar) for incorporation into bacterial lipopolysaccharide in Gram-negative bacteria. The chain is 3-deoxy-manno-octulosonate cytidylyltransferase 2 from Hydrogenovibrio crunogenus (strain DSM 25203 / XCL-2) (Thiomicrospira crunogena).